A 477-amino-acid polypeptide reads, in one-letter code: Cysteine protease ATG4b (477 aa).

The tract at residues Ser-11 to Asn-39 is disordered. Polar residues predominate over residues Ser-25–Asn-39. Cys-173 serves as the catalytic Nucleophile. Catalysis depends on residues Asp-368 and His-370. The tract at residues Ala-453 to Leu-477 is disordered. Residues Glu-454–Ile-465 show a composition bias toward low complexity.

This sequence belongs to the peptidase C54 family. In terms of assembly, interacts with ATG8a and ATG8d. As to expression, constitutively expressed.

The protein resides in the cytoplasm. The enzyme catalyses [protein]-C-terminal L-amino acid-glycyl-phosphatidylethanolamide + H2O = [protein]-C-terminal L-amino acid-glycine + a 1,2-diacyl-sn-glycero-3-phosphoethanolamine. Cysteine protease that plays a key role in autophagy by mediating both proteolytic activation and delipidation of ATG8 family proteins. The protease activity is required for proteolytic activation of ATG8 family proteins: cleaves the C-terminal amino acid of ATG8 proteins to reveal a C-terminal glycine. Exposure of the glycine at the C-terminus is essential for ATG8 proteins conjugation to phosphatidylethanolamine (PE) and insertion to membranes, which is necessary for autophagy. In addition to the protease activity, also mediates delipidation of PE-conjugated ATG8 proteins. In Arabidopsis thaliana (Mouse-ear cress), this protein is Cysteine protease ATG4b.